A 170-amino-acid polypeptide reads, in one-letter code: Shikimate kinase (170 aa).

15 to 20 (GTGKTT) serves as a coordination point for ATP. T19 contacts Mg(2+). 3 residues coordinate substrate: D37, R61, and G82. R120 provides a ligand contact to ATP. Substrate is bound at residue R138. Q154 contacts ATP.

Belongs to the shikimate kinase family. In terms of assembly, monomer. Requires Mg(2+) as cofactor.

The protein localises to the cytoplasm. It catalyses the reaction shikimate + ATP = 3-phosphoshikimate + ADP + H(+). It participates in metabolic intermediate biosynthesis; chorismate biosynthesis; chorismate from D-erythrose 4-phosphate and phosphoenolpyruvate: step 5/7. Its function is as follows. Catalyzes the specific phosphorylation of the 3-hydroxyl group of shikimic acid using ATP as a cosubstrate. This is Shikimate kinase from Staphylococcus epidermidis (strain ATCC 35984 / DSM 28319 / BCRC 17069 / CCUG 31568 / BM 3577 / RP62A).